A 97-amino-acid polypeptide reads, in one-letter code: U-reduvitoxin-Pr10a (97 aa).

The signal sequence occupies residues 1–18; it reads MKTALFLVFALAFIAVEG. Pacifastin domains follow at residues 22-59 and 62-97; these read KACSKPGQTVLAPDGCNHCRCSKNGIIMGCTKKMCPPR and KQSCKPGATFKHKDGCNTCKCSDDGKSARCTARLCW. Disulfide bonds link Cys-24-Cys-42, Cys-37-Cys-56, and Cys-40-Cys-51. Residues 57–59 form a pro-Pro-Arg motif necessary for proteolytic processing region; that stretch reads PPR. 3 cysteine pairs are disulfide-bonded: Cys-65-Cys-82, Cys-77-Cys-96, and Cys-80-Cys-91.

This sequence belongs to the protease inhibitor I19 family. Expressed by the venom gland.

The protein resides in the secreted. Functionally, inhibits trypsin activity and prophenoloxidase (PPO) activation, an enzyme essential for both clotting and insect innate immune responses. It does not inhibit activity of chymotrypsin and protease K, and has no effect on phenoloxidase (PO) activity. This chain is U-reduvitoxin-Pr10a, found in Platymeris rhadamanthus (Red spot assassin bug).